Reading from the N-terminus, the 498-residue chain is Glutamate--tRNA ligase (498 aa).

Residues 11–21 (PSPTGHLHIGN) carry the 'HIGH' region motif. A 'KMSKS' region motif is present at residues 260–264 (KLSKR). K263 contacts ATP.

Belongs to the class-I aminoacyl-tRNA synthetase family. Glutamate--tRNA ligase type 1 subfamily. Monomer.

It is found in the cytoplasm. It catalyses the reaction tRNA(Glu) + L-glutamate + ATP = L-glutamyl-tRNA(Glu) + AMP + diphosphate. In terms of biological role, catalyzes the attachment of glutamate to tRNA(Glu) in a two-step reaction: glutamate is first activated by ATP to form Glu-AMP and then transferred to the acceptor end of tRNA(Glu). This Leuconostoc citreum (strain KM20) protein is Glutamate--tRNA ligase.